The following is a 345-amino-acid chain: D-fructose 1,6-bisphosphatase class 2/sedoheptulose 1,7-bisphosphatase (345 aa).

Mn(2+) contacts are provided by Asp33, Glu57, Asp97, and Glu100. Residues 100 to 102 (EGT), Tyr131, 176 to 178 (RDR), and 198 to 200 (DGD) each bind substrate. Position 225 (Glu225) interacts with Mn(2+).

The protein belongs to the FBPase class 2 family. As to quaternary structure, homotetramer. Mn(2+) is required as a cofactor.

It catalyses the reaction beta-D-fructose 1,6-bisphosphate + H2O = beta-D-fructose 6-phosphate + phosphate. It carries out the reaction D-sedoheptulose 1,7-bisphosphate + H2O = D-sedoheptulose 7-phosphate + phosphate. It functions in the pathway carbohydrate biosynthesis; Calvin cycle. In terms of biological role, catalyzes the hydrolysis of fructose 1,6-bisphosphate (Fru 1,6-P2) and sedoheptulose 1,7-bisphosphate (Sed 1,7-P2) to fructose 6-phosphate and sedoheptulose 7-phosphate, respectively. The sequence is that of D-fructose 1,6-bisphosphatase class 2/sedoheptulose 1,7-bisphosphatase from Trichormus variabilis (strain ATCC 29413 / PCC 7937) (Anabaena variabilis).